Reading from the N-terminus, the 380-residue chain is S-phase entry cyclin-6 (380 aa).

Positions 63–91 are disordered; the sequence is PRGKLQRDSTHLEKTRKRQLSNDSTDPIE.

The protein belongs to the cyclin family. Cyclin AB subfamily.

In terms of biological role, involved in G1/S and or S phase progression. Interacts with CDC28. In Saccharomyces cerevisiae (strain ATCC 204508 / S288c) (Baker's yeast), this protein is S-phase entry cyclin-6 (CLB6).